We begin with the raw amino-acid sequence, 482 residues long: F-box/LRR-repeat protein At3g58930 (482 aa).

An F-box domain is found at 1–47 (MDRVSNLPDGVRGHILSFLPAKHIALTSVLSKSWLNLWKLIPILDID). LRR repeat units follow at residues 122–150 (SYED…KIRN), 175–200 (SDLI…RMAS), 222–248 (GTGC…NYSD), 313–344 (ILYL…GIKS), and 345–370 (EEGR…IIEG).

The sequence is that of F-box/LRR-repeat protein At3g58930 from Arabidopsis thaliana (Mouse-ear cress).